The chain runs to 309 residues: Putative proline iminopeptidase (309 aa).

In terms of domain architecture, AB hydrolase-1 spans 33–291 (LYVHGGPGSG…LYVTNNAGHS (259 aa)). The active-site Nucleophile is serine 105. Aspartate 262 is an active-site residue. The active-site Proton donor is the histidine 290.

It belongs to the peptidase S33 family.

The protein resides in the cytoplasm. It carries out the reaction Release of N-terminal proline from a peptide.. Specifically catalyzes the removal of N-terminal proline residues from peptides. This Mycoplasma pneumoniae (strain ATCC 29342 / M129 / Subtype 1) (Mycoplasmoides pneumoniae) protein is Putative proline iminopeptidase (pip).